The sequence spans 986 residues: Regulator of telomere elongation helicase 1 homolog (986 aa).

Residues 7 to 326 (AGIPVHFPFE…KEMLLELEKA (320 aa)) enclose the Helicase ATP-binding domain. ATP is bound at residue 42 to 49 (SPTGTGKT). 4 residues coordinate [4Fe-4S] cluster: Cys148, Cys166, Cys175, and Cys211. A DEAH box motif is present at residues 254–257 (DEGH). Thr875 carries the post-translational modification Phosphothreonine.

This sequence belongs to the helicase family. RAD3/XPD subfamily.

Its subcellular location is the nucleus. It catalyses the reaction ATP + H2O = ADP + phosphate + H(+). Its function is as follows. A probable ATP-dependent DNA helicase implicated in DNA repair and the maintenance of genomic stability. Acts as an anti-recombinase to counteract toxic recombination and limit crossover during meiosis. Regulates meiotic recombination and crossover homeostasis by physically dissociating strand invasion events and thereby promotes noncrossover repair by meiotic synthesis dependent strand annealing (SDSA) as well as disassembly of D loop recombination intermediates. The sequence is that of Regulator of telomere elongation helicase 1 homolog from Drosophila grimshawi (Hawaiian fruit fly).